Consider the following 99-residue polypeptide: Large ribosomal subunit protein uL23 (99 aa).

Belongs to the universal ribosomal protein uL23 family. In terms of assembly, part of the 50S ribosomal subunit. Contacts protein L29, and trigger factor when it is bound to the ribosome.

In terms of biological role, one of the early assembly proteins it binds 23S rRNA. One of the proteins that surrounds the polypeptide exit tunnel on the outside of the ribosome. Forms the main docking site for trigger factor binding to the ribosome. The protein is Large ribosomal subunit protein uL23 of Psychromonas ingrahamii (strain DSM 17664 / CCUG 51855 / 37).